Reading from the N-terminus, the 251-residue chain is Imidazole glycerol phosphate synthase subunit HisF (251 aa).

Active-site residues include Asp-11 and Asp-130.

The protein belongs to the HisA/HisF family. As to quaternary structure, heterodimer of HisH and HisF.

The protein localises to the cytoplasm. The enzyme catalyses 5-[(5-phospho-1-deoxy-D-ribulos-1-ylimino)methylamino]-1-(5-phospho-beta-D-ribosyl)imidazole-4-carboxamide + L-glutamine = D-erythro-1-(imidazol-4-yl)glycerol 3-phosphate + 5-amino-1-(5-phospho-beta-D-ribosyl)imidazole-4-carboxamide + L-glutamate + H(+). It participates in amino-acid biosynthesis; L-histidine biosynthesis; L-histidine from 5-phospho-alpha-D-ribose 1-diphosphate: step 5/9. In terms of biological role, IGPS catalyzes the conversion of PRFAR and glutamine to IGP, AICAR and glutamate. The HisF subunit catalyzes the cyclization activity that produces IGP and AICAR from PRFAR using the ammonia provided by the HisH subunit. The polypeptide is Imidazole glycerol phosphate synthase subunit HisF (Phocaeicola vulgatus (strain ATCC 8482 / DSM 1447 / JCM 5826 / CCUG 4940 / NBRC 14291 / NCTC 11154) (Bacteroides vulgatus)).